We begin with the raw amino-acid sequence, 851 residues long: Envelope glycoprotein gp160 (851 aa).

The first 31 residues, 1–31, serve as a signal peptide directing secretion; that stretch reads MKVMGIQRNCQQWWIWGILGFWMLMICNGMG. The Extracellular segment spans residues 32–672; that stretch reads NLWVTVYYGV…ITNWLWYIKI (641 aa). Residues cysteine 53 and cysteine 73 are joined by a disulfide bond. Residues asparagine 87, asparagine 135, asparagine 141, asparagine 153, asparagine 157, asparagine 183, and asparagine 194 are each glycosylated (N-linked (GlcNAc...) asparagine; by host). 5 cysteine pairs are disulfide-bonded: cysteine 118–cysteine 202, cysteine 125–cysteine 193, cysteine 130–cysteine 154, cysteine 215–cysteine 244, and cysteine 225–cysteine 236. Positions 130 to 153 are V1; it reads CNAIKNNTKVTNNSINSANDEMKN. Positions 154–193 are V2; sequence CSFNITTELRDKKRKAYALFYKLDIVPLNNGSTDYRLINC. 8 N-linked (GlcNAc...) asparagine; by host glycosylation sites follow: asparagine 238, asparagine 259, asparagine 273, asparagine 286, asparagine 298, asparagine 328, asparagine 335, and asparagine 351. The V3 stretch occupies residues 293 to 326; that stretch reads CTRPSNNTRESIRIGPGQTFYATGDIIGDIRQAH. Cysteines 293 and 327 form a disulfide. The CD4-binding loop stretch occupies residues 359-369; it reads SSGGDLEITTH. Cystine bridges form between cysteine 373–cysteine 433 and cysteine 380–cysteine 406. The segment at 380–406 is V4; it reads CNTSNLFNSTKLELFNSSTNLNITLQC. N-linked (GlcNAc...) asparagine; by host glycosylation is found at asparagine 381, asparagine 387, asparagine 395, asparagine 401, and asparagine 436. V5 regions lie at residues 449–460 and 451–460; these read EPHSTKEIFRPE and HSTKEIFRPE. A fusion peptide region spans residues 501 to 520; sequence AALGALFLGFLGAAGSTMGA. An immunosuppression region spans residues 562 to 580; the sequence is KQLQTRVLAIERHLRDQQL. Residues cysteine 586 and cysteine 592 are joined by a disulfide bond. Residues asparagine 599, asparagine 604, asparagine 613, asparagine 625, and asparagine 662 are each glycosylated (N-linked (GlcNAc...) asparagine; by host). A coiled-coil region spans residues 621–655; the sequence is REISNYTDIIYNLLEVSQNQQDKNEKDLLALDKWE. An MPER; binding to GalCer region spans residues 650–671; that stretch reads ALDKWENLWNWFNITNWLWYIK. The chain crosses the membrane as a helical span at residues 673 to 693; sequence FIMIVGGVIGLRIIFAVLSIV. The Cytoplasmic segment spans residues 694-851; sequence NRVRQGYSPL…IRQGLEAALQ (158 aa). The YXXL motif; contains endocytosis signal motif lies at 700-703; it reads YSPL. Cysteine 752 carries S-palmitoyl cysteine; by host lipidation.

It belongs to the HIV-1 env protein family. The mature envelope protein (Env) consists of a homotrimer of non-covalently associated gp120-gp41 heterodimers. The resulting complex protrudes from the virus surface as a spike. There seems to be as few as 10 spikes on the average virion. Interacts with host CD4, CCR5 and CXCR4. Gp120 also interacts with the C-type lectins CD209/DC-SIGN and CLEC4M/DC-SIGNR (collectively referred to as DC-SIGN(R)). Gp120 and gp41 interact with GalCer. Gp120 interacts with host ITGA4/ITGB7 complex; on CD4+ T-cells, this interaction results in rapid activation of integrin ITGAL/LFA-1, which facilitates efficient cell-to-cell spreading of HIV-1. Gp120 interacts with cell-associated heparan sulfate; this interaction increases virus infectivity on permissive cells and may be involved in infection of CD4- cells. As to quaternary structure, the mature envelope protein (Env) consists of a homotrimer of non-covalently associated gp120-gp41 heterodimers. The resulting complex protrudes from the virus surface as a spike. There seems to be as few as 10 spikes on the average virion. Highly glycosylated by host. The high number of glycan on the protein is reffered to as 'glycan shield' because it contributes to hide protein sequence from adaptive immune system. Post-translationally, palmitoylation of the transmembrane protein and of Env polyprotein (prior to its proteolytic cleavage) is essential for their association with host cell membrane lipid rafts. Palmitoylation is therefore required for envelope trafficking to classical lipid rafts, but not for viral replication. In terms of processing, specific enzymatic cleavages in vivo yield mature proteins. Envelope glycoproteins are synthesized as an inactive precursor that is heavily N-glycosylated and processed likely by host cell furin in the Golgi to yield the mature SU and TM proteins. The cleavage site between SU and TM requires the minimal sequence [KR]-X-[KR]-R. About 2 of the 9 disulfide bonds of gp41 are reduced by P4HB/PDI, following binding to CD4 receptor.

It localises to the virion membrane. The protein localises to the host cell membrane. It is found in the host endosome membrane. Functionally, oligomerizes in the host endoplasmic reticulum into predominantly trimers. In a second time, gp160 transits in the host Golgi, where glycosylation is completed. The precursor is then proteolytically cleaved in the trans-Golgi and thereby activated by cellular furin or furin-like proteases to produce gp120 and gp41. Its function is as follows. Attaches the virus to the host lymphoid cell by binding to the primary receptor CD4. This interaction induces a structural rearrangement creating a high affinity binding site for a chemokine coreceptor like CXCR4 and/or CCR5. Acts as a ligand for CD209/DC-SIGN and CLEC4M/DC-SIGNR, which are respectively found on dendritic cells (DCs), and on endothelial cells of liver sinusoids and lymph node sinuses. These interactions allow capture of viral particles at mucosal surfaces by these cells and subsequent transmission to permissive cells. HIV subverts the migration properties of dendritic cells to gain access to CD4+ T-cells in lymph nodes. Virus transmission to permissive T-cells occurs either in trans (without DCs infection, through viral capture and transmission), or in cis (following DCs productive infection, through the usual CD4-gp120 interaction), thereby inducing a robust infection. In trans infection, bound virions remain infectious over days and it is proposed that they are not degraded, but protected in non-lysosomal acidic organelles within the DCs close to the cell membrane thus contributing to the viral infectious potential during DCs' migration from the periphery to the lymphoid tissues. On arrival at lymphoid tissues, intact virions recycle back to DCs' cell surface allowing virus transmission to CD4+ T-cells. Acts as a class I viral fusion protein. Under the current model, the protein has at least 3 conformational states: pre-fusion native state, pre-hairpin intermediate state, and post-fusion hairpin state. During fusion of viral and target intracellular membranes, the coiled coil regions (heptad repeats) assume a trimer-of-hairpins structure, positioning the fusion peptide in close proximity to the C-terminal region of the ectodomain. The formation of this structure appears to drive apposition and subsequent fusion of viral and target cell membranes. Complete fusion occurs in host cell endosomes and is dynamin-dependent, however some lipid transfer might occur at the plasma membrane. The virus undergoes clathrin-dependent internalization long before endosomal fusion, thus minimizing the surface exposure of conserved viral epitopes during fusion and reducing the efficacy of inhibitors targeting these epitopes. Membranes fusion leads to delivery of the nucleocapsid into the cytoplasm. The chain is Envelope glycoprotein gp160 from Homo sapiens (Human).